The chain runs to 498 residues: UDP-N-acetylmuramate--L-alanine ligase (498 aa).

133 to 139 (GSSGKTT) is a binding site for ATP.

The protein belongs to the MurCDEF family.

The protein resides in the cytoplasm. It catalyses the reaction UDP-N-acetyl-alpha-D-muramate + L-alanine + ATP = UDP-N-acetyl-alpha-D-muramoyl-L-alanine + ADP + phosphate + H(+). It participates in cell wall biogenesis; peptidoglycan biosynthesis. Functionally, cell wall formation. The chain is UDP-N-acetylmuramate--L-alanine ligase from Wolbachia pipientis wMel.